Here is a 140-residue protein sequence, read N- to C-terminus: Translation initiation factor 2 subunit beta (140 aa).

This sequence belongs to the eIF-2-beta/eIF-5 family. In terms of assembly, heterotrimer composed of an alpha, a beta and a gamma chain.

Its function is as follows. eIF-2 functions in the early steps of protein synthesis by forming a ternary complex with GTP and initiator tRNA. The protein is Translation initiation factor 2 subunit beta (eif2b) of Pyrococcus horikoshii (strain ATCC 700860 / DSM 12428 / JCM 9974 / NBRC 100139 / OT-3).